A 285-amino-acid chain; its full sequence is Nucleotide-binding protein Gmet_1286 (285 aa).

8–15 (GLSGSGKS) is an ATP binding site. Residue 59–62 (DIRG) coordinates GTP.

It belongs to the RapZ-like family.

Its function is as follows. Displays ATPase and GTPase activities. The sequence is that of Nucleotide-binding protein Gmet_1286 from Geobacter metallireducens (strain ATCC 53774 / DSM 7210 / GS-15).